A 213-amino-acid chain; its full sequence is Ribonuclease T (213 aa).

In terms of domain architecture, Exonuclease spans 28-202 (VVVDVETGGF…YDTEQTARLF (175 aa)). Mg(2+)-binding residues include Asp31, Glu33, His189, and Asp194. His189 (proton donor/acceptor) is an active-site residue.

Belongs to the RNase T family. In terms of assembly, homodimer. The cofactor is Mg(2+).

In terms of biological role, trims short 3' overhangs of a variety of RNA species, leaving a one or two nucleotide 3' overhang. Responsible for the end-turnover of tRNA: specifically removes the terminal AMP residue from uncharged tRNA (tRNA-C-C-A). Also appears to be involved in tRNA biosynthesis. This Xanthomonas axonopodis pv. citri (strain 306) protein is Ribonuclease T.